Consider the following 212-residue polypeptide: Octanoyltransferase (212 aa).

Positions 31–209 constitute a BPL/LPL catalytic domain; that stretch reads AETQDEIWLV…HFADLLGYNI (179 aa). Substrate-binding positions include 70-77, 138-140, and 151-153; these read RGGQITYH, SLG, and GLA. C169 functions as the Acyl-thioester intermediate in the catalytic mechanism.

This sequence belongs to the LipB family.

The protein resides in the cytoplasm. It catalyses the reaction octanoyl-[ACP] + L-lysyl-[protein] = N(6)-octanoyl-L-lysyl-[protein] + holo-[ACP] + H(+). It functions in the pathway protein modification; protein lipoylation via endogenous pathway; protein N(6)-(lipoyl)lysine from octanoyl-[acyl-carrier-protein]: step 1/2. Catalyzes the transfer of endogenously produced octanoic acid from octanoyl-acyl-carrier-protein onto the lipoyl domains of lipoate-dependent enzymes. Lipoyl-ACP can also act as a substrate although octanoyl-ACP is likely to be the physiological substrate. This Haemophilus influenzae (strain PittGG) protein is Octanoyltransferase.